A 197-amino-acid polypeptide reads, in one-letter code: Isochorismatase domain-containing protein 2 (197 aa).

This sequence belongs to the isochorismatase family.

This chain is Isochorismatase domain-containing protein 2 (isoc2), found in Danio rerio (Zebrafish).